The chain runs to 101 residues: Small ribosomal subunit protein uS14m (101 aa).

It belongs to the universal ribosomal protein uS14 family. In terms of assembly, component of the mitochondrial ribosome small subunit (28S) which comprises a 12S rRNA and about 30 distinct proteins. Interacts with LIAT1.

Its subcellular location is the mitochondrion. This chain is Small ribosomal subunit protein uS14m (mrps14), found in Dictyostelium discoideum (Social amoeba).